The sequence spans 461 residues: Carboxypeptidase Rv3627c (461 aa).

The signal sequence occupies residues 1-28 (MGPTRWRKSTHVVVGAAVLAFVAVVVAA). Ser114 functions as the Acyl-ester intermediate in the catalytic mechanism. Lys117 (proton acceptor) is an active-site residue. Ser295 is an active-site residue.

The protein belongs to the peptidase S13 family.

In terms of biological role, carboxypeptidase that cleaves terminal D-alanine from peptidoglycan in the mycobacterial cell wall. May cleave L-Lys-D-Ala and/or D-Ala-D-Ala peptide bonds. Exerts important effects on mycobacterial cell morphology and cell division. This is Carboxypeptidase Rv3627c from Mycobacterium tuberculosis (strain ATCC 25618 / H37Rv).